The following is a 152-amino-acid chain: Protein SprT-like (152 aa).

A SprT-like domain is found at glutamine 7–isoleucine 148. Residue histidine 67 participates in Zn(2+) binding. Residue glutamate 68 is part of the active site. Histidine 71 is a Zn(2+) binding site.

It belongs to the SprT family. Zn(2+) serves as cofactor.

It localises to the cytoplasm. This chain is Protein SprT-like, found in Bacillus cereus (strain AH187).